A 486-amino-acid chain; its full sequence is 6-phosphogluconate dehydrogenase, decarboxylating 2 (486 aa).

Residues 12–17 (GLAVMG), 35–37 (NRT), 79–81 (VKA), and Asn-107 each bind NADP(+). Residues Asn-107 and 133 to 135 (SGG) contribute to the substrate site. The active-site Proton acceptor is the Lys-188. 191–192 (HN) provides a ligand contact to substrate. Catalysis depends on Glu-195, which acts as the Proton donor. Substrate-binding residues include Tyr-196, Lys-266, Arg-293, Arg-456, and His-462. A Microbody targeting signal motif is present at residues 484-486 (SKI).

It belongs to the 6-phosphogluconate dehydrogenase family. As to quaternary structure, forms homodimer. Forms heterodimers with PGD1 or PGD3.

It localises to the cytoplasm. It is found in the cytosol. Its subcellular location is the peroxisome. It catalyses the reaction 6-phospho-D-gluconate + NADP(+) = D-ribulose 5-phosphate + CO2 + NADPH. It participates in carbohydrate degradation; pentose phosphate pathway; D-ribulose 5-phosphate from D-glucose 6-phosphate (oxidative stage): step 3/3. Catalyzes the oxidative decarboxylation of 6-phosphogluconate to ribulose 5-phosphate and CO(2), with concomitant reduction of NADP to NADPH. Required for guided growth of the male gametophytes and interaction between the pollen tube and the ovule. The sequence is that of 6-phosphogluconate dehydrogenase, decarboxylating 2 from Arabidopsis thaliana (Mouse-ear cress).